Here is a 103-residue protein sequence, read N- to C-terminus: ESAT-6-like protein EsxF (103 aa).

Belongs to the WXG100 family. CFP-10 subfamily.

It localises to the secreted. This Mycobacterium tuberculosis (strain CDC 1551 / Oshkosh) protein is ESAT-6-like protein EsxF.